We begin with the raw amino-acid sequence, 674 residues long: Probable potassium transport system protein Kup (674 aa).

12 consecutive transmembrane segments (helical) span residues 7–27 (IFWG…TSPL), 52–72 (LSLV…LIAL), 95–115 (WLIL…TLTP), 145–165 (LVTF…TSFI), 169–189 (FGPL…VNLI), 204–224 (LMLL…SVFL), 244–264 (IYLT…GQGA), 291–311 (VYLF…QALI), 342–362 (IYIR…LVYF), 368–388 (MEAA…ILLS), 397–417 (VVFN…FLIS), and 425–445 (GGYV…IWYF).

It belongs to the HAK/KUP transporter (TC 2.A.72) family.

The protein localises to the cell membrane. It catalyses the reaction K(+)(in) + H(+)(in) = K(+)(out) + H(+)(out). Transport of potassium into the cell. Likely operates as a K(+):H(+) symporter. The sequence is that of Probable potassium transport system protein Kup from Ligilactobacillus salivarius (strain UCC118) (Lactobacillus salivarius).